The primary structure comprises 121 residues: Glycine cleavage system H protein (121 aa).

Residues Val16 to Arg98 form the Lipoyl-binding domain. Position 57 is an N6-lipoyllysine (Lys57).

The protein belongs to the GcvH family. As to quaternary structure, the glycine cleavage system is composed of four proteins: P, T, L and H. The cofactor is (R)-lipoate.

Functionally, the glycine cleavage system catalyzes the degradation of glycine. The H protein shuttles the methylamine group of glycine from the P protein to the T protein. The protein is Glycine cleavage system H protein of Phenylobacterium zucineum (strain HLK1).